A 332-amino-acid chain; its full sequence is Glyceraldehyde-3-phosphate dehydrogenase 2 (332 aa).

NAD(+)-binding positions include 11-12, D32, and R77; that span reads RI. Residues 148 to 150, T179, 208 to 209, and R231 each bind D-glyceraldehyde 3-phosphate; these read SCT and TG. The active-site Nucleophile is the C149. N313 contributes to the NAD(+) binding site.

Belongs to the glyceraldehyde-3-phosphate dehydrogenase family. In terms of assembly, homotetramer.

It is found in the cytoplasm. The catalysed reaction is D-glyceraldehyde 3-phosphate + phosphate + NAD(+) = (2R)-3-phospho-glyceroyl phosphate + NADH + H(+). The protein operates within carbohydrate degradation; glycolysis; pyruvate from D-glyceraldehyde 3-phosphate: step 1/5. The sequence is that of Glyceraldehyde-3-phosphate dehydrogenase 2 (Gapdh2) from Drosophila pseudoobscura pseudoobscura (Fruit fly).